The sequence spans 304 residues: Aspartate carbamoyltransferase catalytic subunit (304 aa).

Residues R56 and T57 each coordinate carbamoyl phosphate. Residue K85 participates in L-aspartate binding. Residues R106, H134, and Q137 each contribute to the carbamoyl phosphate site. L-aspartate is bound by residues R167 and R226. Carbamoyl phosphate-binding residues include L265 and P266.

It belongs to the aspartate/ornithine carbamoyltransferase superfamily. ATCase family. As to quaternary structure, heterooligomer of catalytic and regulatory chains.

The enzyme catalyses carbamoyl phosphate + L-aspartate = N-carbamoyl-L-aspartate + phosphate + H(+). Its pathway is pyrimidine metabolism; UMP biosynthesis via de novo pathway; (S)-dihydroorotate from bicarbonate: step 2/3. Catalyzes the condensation of carbamoyl phosphate and aspartate to form carbamoyl aspartate and inorganic phosphate, the committed step in the de novo pyrimidine nucleotide biosynthesis pathway. The chain is Aspartate carbamoyltransferase catalytic subunit from Picrophilus torridus (strain ATCC 700027 / DSM 9790 / JCM 10055 / NBRC 100828 / KAW 2/3).